The following is a 207-amino-acid chain: LexA repressor (207 aa).

Residues 28–48 (RAEISRELGFKSANAAEEHLK) constitute a DNA-binding region (H-T-H motif). Active-site for autocatalytic cleavage activity residues include Ser-123 and Lys-160.

It belongs to the peptidase S24 family. As to quaternary structure, homodimer.

The enzyme catalyses Hydrolysis of Ala-|-Gly bond in repressor LexA.. Functionally, represses a number of genes involved in the response to DNA damage (SOS response), including recA and lexA. In the presence of single-stranded DNA, RecA interacts with LexA causing an autocatalytic cleavage which disrupts the DNA-binding part of LexA, leading to derepression of the SOS regulon and eventually DNA repair. The protein is LexA repressor of Haemophilus influenzae (strain ATCC 51907 / DSM 11121 / KW20 / Rd).